Consider the following 330-residue polypeptide: Cobalamin biosynthesis protein CobD (330 aa).

The next 4 helical transmembrane spans lie at 60-80 (TLVI…PPIV), 153-173 (GIIA…LLGV), 227-247 (LGIV…WKIF), and 308-328 (IVLF…FVLT).

The protein belongs to the CobD/CbiB family.

The protein resides in the cell membrane. Its pathway is cofactor biosynthesis; adenosylcobalamin biosynthesis. Its function is as follows. Converts cobyric acid to cobinamide by the addition of aminopropanol on the F carboxylic group. This is Cobalamin biosynthesis protein CobD from Desulfotalea psychrophila (strain LSv54 / DSM 12343).